A 260-amino-acid polypeptide reads, in one-letter code: Purine nucleoside phosphorylase XF_0940 (260 aa).

The Zn(2+) site is built by H79, C120, and H137.

It belongs to the purine nucleoside phosphorylase YfiH/LACC1 family. Homodimer. Cu(2+) serves as cofactor. It depends on Zn(2+) as a cofactor.

It carries out the reaction adenosine + phosphate = alpha-D-ribose 1-phosphate + adenine. The catalysed reaction is S-methyl-5'-thioadenosine + phosphate = 5-(methylsulfanyl)-alpha-D-ribose 1-phosphate + adenine. It catalyses the reaction inosine + phosphate = alpha-D-ribose 1-phosphate + hypoxanthine. The enzyme catalyses adenosine + H2O + H(+) = inosine + NH4(+). In terms of biological role, purine nucleoside enzyme that catalyzes the phosphorolysis of adenosine and inosine nucleosides, yielding D-ribose 1-phosphate and the respective free bases, adenine and hypoxanthine. Also catalyzes the phosphorolysis of S-methyl-5'-thioadenosine into adenine and S-methyl-5-thio-alpha-D-ribose 1-phosphate. Also has adenosine deaminase activity. In Xylella fastidiosa (strain 9a5c), this protein is Purine nucleoside phosphorylase XF_0940.